The primary structure comprises 297 residues: Tyrosine recombinase XerD (297 aa).

A Core-binding (CB) domain is found at 1-86 (MKNLALIDLF…AMRKLFQYLY (86 aa)). The region spanning 107–291 (RLPKYLTEQQ…AKERLKRLHE (185 aa)) is the Tyr recombinase domain. Catalysis depends on residues arginine 147, lysine 171, histidine 243, arginine 246, and histidine 269. Tyrosine 278 serves as the catalytic O-(3'-phospho-DNA)-tyrosine intermediate.

The protein belongs to the 'phage' integrase family. XerD subfamily. In terms of assembly, forms a cyclic heterotetrameric complex composed of two molecules of XerC and two molecules of XerD.

The protein resides in the cytoplasm. Its function is as follows. Site-specific tyrosine recombinase, which acts by catalyzing the cutting and rejoining of the recombining DNA molecules. The XerC-XerD complex is essential to convert dimers of the bacterial chromosome into monomers to permit their segregation at cell division. It also contributes to the segregational stability of plasmids. The polypeptide is Tyrosine recombinase XerD (Haemophilus influenzae (strain ATCC 51907 / DSM 11121 / KW20 / Rd)).